Here is a 502-residue protein sequence, read N- to C-terminus: Cytochrome P450 monooxygenase AacuE (502 aa).

The chain crosses the membrane as a helical span at residues 4–26; that stretch reads AITGLVATVTTFLAYIVFLSYTP. N-linked (GlcNAc...) asparagine glycosylation is present at Asn393. Cys439 serves as a coordination point for heme.

It belongs to the cytochrome P450 family. Heme serves as cofactor.

The protein resides in the membrane. Its pathway is secondary metabolite biosynthesis. Its function is as follows. Cytochrome P450 monooxygenase; part of the gene cluster that mediates the biosynthesis of the tetrahydroxanthone dimer secalonic acid D. The pathway begins with the synthesis of atrochrysone thioester by the polyketide synthase AacuL. The atrochrysone carboxyl ACP thioesterase AacuM then breaks the thioester bond and releases the atrochrysone carboxylic acid from AacuL. Atrochrysone carboxylic acid is decarboxylated by the decarboxylase AacuI, and oxidized by the anthrone oxygenase AacuG to yield emodin. Emodin is then reduced to emodin hydroquinone by a yet unidentified oxidoreductase. A-ring reduction by the short chain dehydrogenase AacuN, dehydration by the scytalone dehydratase-like protein AacuK and probable spontaneous re-oxidation, results in overall deoxygenation to chrysophanol. Baeyer-Villiger oxidation by the Baeyer-Villiger monooxygenase (BVMO) AacuH then yields monodictyphenone. Monodictyphenone is transformed into compounds with the tetrahydroxanthone skeleton via methylesterification by the methyltransferase AacuQ, followed by the action of the flavin-dependent monooxygenase AacuC, the isomerase AacuP, and the short chain dehydrogenase/reductase AacuF or AacuD. AacuF and AacuD should accept the same compound as a substrate but perform the ketoreduction with a different stereoselectivity, thus yielding blennolides B and A, respectively. In the final step of the biosynthesis, the cytochrome P450 monooxygenase AacuE accepts blennolide B and/or blennolide A to conduct the dimerization reaction to furnish the tetrahydroxanthone dimers, secalonic acids D, B, and F. The chain is Cytochrome P450 monooxygenase AacuE from Aspergillus aculeatus (strain ATCC 16872 / CBS 172.66 / WB 5094).